A 274-amino-acid chain; its full sequence is Large ribosomal subunit protein uL2 (274 aa).

Residues 223-265 (VVMNPVDHPHGGGEGRTSGGRHPVSPWGVPTKGYKTRSNKRTD) form a disordered region.

This sequence belongs to the universal ribosomal protein uL2 family. Part of the 50S ribosomal subunit. Forms a bridge to the 30S subunit in the 70S ribosome.

Functionally, one of the primary rRNA binding proteins. Required for association of the 30S and 50S subunits to form the 70S ribosome, for tRNA binding and peptide bond formation. It has been suggested to have peptidyltransferase activity; this is somewhat controversial. Makes several contacts with the 16S rRNA in the 70S ribosome. This chain is Large ribosomal subunit protein uL2, found in Vibrio vulnificus (strain CMCP6).